The chain runs to 944 residues: Protein phosphatase 1 regulatory subunit 37 homolog (944 aa).

The interval 42–71 is disordered; it reads QQQSHSAATSVRKKTCQDANSSGEDPNGRI. LRR repeat units follow at residues 203–224, 232–255, 262–282, 290–311, and 318–338; these read SCVR…TTIF, SLQM…CKMA, SLTC…LVLI, GLRE…HIYQ, and SLQL…RHIC. The disordered stretch occupies residues 517-598; that stretch reads EEGDSGVEKK…KERHQRFVRS (82 aa). The segment covering 522 to 542 has biased composition (basic and acidic residues); that stretch reads GVEKKDGNECEGEDNKDRQDT. Composition is skewed to polar residues over residues 543–554 and 567–585; these read PAETENGVSSNE and PESN…STSK. Positions 586–595 are enriched in basic residues; the sequence is LSRKERHQRF.

This sequence belongs to the PPP1R37 family.

The polypeptide is Protein phosphatase 1 regulatory subunit 37 homolog (Caenorhabditis elegans).